The following is a 347-amino-acid chain: Phosphate acyltransferase (347 aa).

This sequence belongs to the PlsX family. As to quaternary structure, homodimer. Probably interacts with PlsY.

Its subcellular location is the cytoplasm. The enzyme catalyses a fatty acyl-[ACP] + phosphate = an acyl phosphate + holo-[ACP]. The protein operates within lipid metabolism; phospholipid metabolism. In terms of biological role, catalyzes the reversible formation of acyl-phosphate (acyl-PO(4)) from acyl-[acyl-carrier-protein] (acyl-ACP). This enzyme utilizes acyl-ACP as fatty acyl donor, but not acyl-CoA. The polypeptide is Phosphate acyltransferase (Anaplasma marginale (strain St. Maries)).